Here is an 82-residue protein sequence, read N- to C-terminus: RNA-binding protein Hfq (82 aa).

A Sm domain is found at 11 to 71 (DTFLNHVRKT…ISTIMPGAPI (61 aa)).

The protein belongs to the Hfq family. In terms of assembly, homohexamer.

RNA chaperone that binds small regulatory RNA (sRNAs) and mRNAs to facilitate mRNA translational regulation in response to envelope stress, environmental stress and changes in metabolite concentrations. Also binds with high specificity to tRNAs. This is RNA-binding protein Hfq from Rhodopseudomonas palustris (strain HaA2).